Reading from the N-terminus, the 225-residue chain is 2-C-methyl-D-erythritol 4-phosphate cytidylyltransferase (225 aa).

This sequence belongs to the IspD/TarI cytidylyltransferase family. IspD subfamily.

The enzyme catalyses 2-C-methyl-D-erythritol 4-phosphate + CTP + H(+) = 4-CDP-2-C-methyl-D-erythritol + diphosphate. Its pathway is isoprenoid biosynthesis; isopentenyl diphosphate biosynthesis via DXP pathway; isopentenyl diphosphate from 1-deoxy-D-xylulose 5-phosphate: step 2/6. Catalyzes the formation of 4-diphosphocytidyl-2-C-methyl-D-erythritol from CTP and 2-C-methyl-D-erythritol 4-phosphate (MEP). The protein is 2-C-methyl-D-erythritol 4-phosphate cytidylyltransferase of Chromobacterium violaceum (strain ATCC 12472 / DSM 30191 / JCM 1249 / CCUG 213 / NBRC 12614 / NCIMB 9131 / NCTC 9757 / MK).